The following is a 742-amino-acid chain: MKDDFAEEEEVHSFGYKRFGIQEGTQCTKCKNNWALKLSIILLYILCALLTITVAILGYKVVEKMDNVTGGMETSRQTYDDKLTAVESDLKKLGDQTGKKALSTNSELSTFRSDILDLRQQLREITEKTSKNKDTLEKLQASGDALVDRQSQLKETLENNSFLITTVNKTLQAYNGYVTNLQQDTSVLQGNLQSQMYSHNVVIMNLNNLNLTQVQQRNLITNLQRSVDDTSQAIQRIKNDFQNLQQVFLQAKKDTDWLKEKVQSLQTLAANNSALAKANNDTLEDMNSQLSSFTGQMDNITTASQANEQNLKDLQDVHRDAENRTAAKFSQLEERFQLFESDIVNIISNISYTAHYLRTLTSNLNEVRTTCTDTLTKHTDDLTSLNNTLANIRLDSVSLRMQQDLMRSRLDTEVANLSVIMEEMKLVDSKHGQLIKNFTILQGPPGPRGPKGDRGQQGPPGPTGNKGQKGEKGEPGPPGPAGERGPIGPVGPPGERGSKGSKGLQGSKGSRGSPGKPGPQGPSGDPGPPGPPGKDGLPGPQGPPGFQGLQGTVGEPGVPGPRGLPGLPGMPGMPGIKGPPGPPGPSGAAVPLALKTEPTTAPEDNGCLPYWKNFTDKCYYFSTERDFFEDAKLFCERMSSHLVFINTGEEQQWIKNQMVAKQNYWIGLTDLEQENEWRWLDGTLLEYKNWKAGQPDNWGHGHGPGEDCAGLINFGQWNDFPCEDMNHFICEKDRERELAITL.

Residues 1–37 (MKDDFAEEEEVHSFGYKRFGIQEGTQCTKCKNNWALK) lie on the Cytoplasmic side of the membrane. The chain crosses the membrane as a helical; Signal-anchor for type II membrane protein span at residues 38-58 (LSIILLYILCALLTITVAILG). The Extracellular portion of the chain corresponds to 59-742 (YKVVEKMDNV…DRERELAITL (684 aa)). Asparagine 67 carries an N-linked (GlcNAc...) asparagine glycan. Residues 73–141 (ETSRQTYDDK…NKDTLEKLQA (69 aa)) adopt a coiled-coil conformation. 2 N-linked (GlcNAc...) asparagine glycosylation sites follow: asparagine 159 and asparagine 168. Positions 215 to 254 (QQRNLITNLQRSVDDTSQAIQRIKNDFQNLQQVFLQAKKD) form a coiled coil. Asparagine 271 is a glycosylation site (N-linked (GlcNAc...) asparagine). Residues 296-328 (QMDNITTASQANEQNLKDLQDVHRDAENRTAAK) are a coiled coil. The tract at residues 439-591 (TILQGPPGPR…PPGPSGAAVP (153 aa)) is disordered. Collagen-like domains follow at residues 443–502 (GPPG…KGSK) and 527–586 (GPPG…PGPS). Residues 501 to 514 (SKGLQGSKGSRGSP) are compositionally biased toward low complexity. Pro residues predominate over residues 516 to 532 (KPGPQGPSGDPGPPGPP). Over residues 534-556 (KDGLPGPQGPPGFQGLQGTVGEP) the composition is skewed to low complexity. Cystine bridges form between cysteine 607–cysteine 618, cysteine 635–cysteine 730, and cysteine 708–cysteine 722. The C-type lectin domain maps to 614 to 731 (FTDKCYYFST…CEDMNHFICE (118 aa)). Ca(2+) contacts are provided by phenylalanine 644, asparagine 646, glutamate 650, aspartate 670, and glutamate 674. Positions 691, 694, and 696 each coordinate a carbohydrate. The Ca(2+) site is built by glutamine 694, aspartate 696, asparagine 697, glutamate 706, aspartate 707, asparagine 718, aspartate 719, and glutamate 731. Glutamate 706 lines the a carbohydrate pocket. The a carbohydrate site is built by asparagine 718 and aspartate 719.

In terms of assembly, the extracellular domain forms a stable trimer. The extracellular domain interacts with fibrillar amyloid-beta peptide.

It is found in the membrane. Functionally, scavenger receptor that displays several functions associated with host defense. Promotes binding and phagocytosis of Gram-positive, Gram-negative bacteria and yeast. Mediates the recognition, internalization and degradation of oxidatively modified low density lipoprotein (oxLDL) by vascular endothelial cells. Binds to several carbohydrates including Gal-type ligands, D-galactose, L- and D-fucose, GalNAc, T and Tn antigens in a calcium-dependent manner and internalizes specifically GalNAc in nurse-like cells. Also binds to sialyl Lewis X or a trisaccharide and asialo-orosomucoid (ASOR). The sequence is that of Collectin-12 (COLEC12) from Bos taurus (Bovine).